Consider the following 309-residue polypeptide: HTH-type transcriptional regulator MetR (309 aa).

An HTH lysR-type domain is found at 6 to 63 (LEFRHLKTLLALKETGSVSLAAKRVYLTQSALSHQIKLIEEQFGLPLFERKSNPLRFT). Residues 23 to 42 (VSLAAKRVYLTQSALSHQIK) constitute a DNA-binding region (H-T-H motif).

This sequence belongs to the LysR transcriptional regulatory family.

The protein localises to the cytoplasm. In terms of biological role, control of the last step in methionine biosynthesis; MetR is a positive activator of the metA, metE and metH genes. This Haemophilus influenzae (strain ATCC 51907 / DSM 11121 / KW20 / Rd) protein is HTH-type transcriptional regulator MetR (metR).